The sequence spans 684 residues: Protein EXECUTER 1, chloroplastic (684 aa).

Residues Met-1–Arg-31 are compositionally biased toward polar residues. The N-terminal 46 residues, Met-1 to Arg-46, are a transit peptide targeting the chloroplast. The tract at residues Met-1 to Arg-66 is disordered. Low complexity predominate over residues Ser-48 to Ser-61. In terms of domain architecture, UVR spans Asp-127–Asn-162. The disordered stretch occupies residues Thr-278–Glu-318. The segment covering Ser-301–Glu-318 has biased composition (acidic residues).

The protein localises to the plastid. It localises to the chloroplast. Together with EX2, enables higher plants to perceive singlet oxygen as a stress signal in plastid that activates a genetically determined nuclear stress response program which triggers a programmed cell death (PCD). This transfer of singlet oxygen-induced stress-related signals from the plastid to the nucleus that triggers genetically controlled PCD pathway is unique to photosynthetic eukaryotes and operates under mild stress conditions, impeding photosystem II (PSII) without causing photooxidative damage of the plant. The chain is Protein EXECUTER 1, chloroplastic from Arabidopsis thaliana (Mouse-ear cress).